A 552-amino-acid polypeptide reads, in one-letter code: T-box transcription factor TBX4 (552 aa).

The span at Met-1–Phe-14 shows a compositional bias: basic and acidic residues. The interval Met-1–Pro-50 is disordered. Residues Leu-76–Gly-256 constitute a DNA-binding region (T-box). Position 514 is a phosphoserine (Ser-514).

The protein resides in the nucleus. Its function is as follows. Transcriptional regulator that has an essential role in the organogenesis of lungs, pelvis, and hindlimbs. The sequence is that of T-box transcription factor TBX4 (Tbx4) from Mus musculus (Mouse).